Reading from the N-terminus, the 395-residue chain is MKRFLLCSFALVLLYPAGIDMYLVGLPRIAADLNASEAQLHIAFSVYLAGMATAMLFAGKIADQSGRKPVAIVGAIVFMMASLLCSRASEGSLFLSGRFLQGVGAGGCYVVAFAILRDTLDEHRRAKVLSLLNGITCIVPVLAPVMGHLIMLRFPWQSLFYTMSTMGIMVGLLSLFILRETRPARLAPRDLSPSSSAAESLVNRFFVSRLAITTLSVSVILTFVNASPVLLMEVMGFSRGDYAITMALTAGVSMVVSFSTPFALGLFKPRTLMLVSQGLFLTAGVTLSLAHTNTVTLFGLTLICAGFSVGFGVAMSQALGPFSLRAGVASSTLGIAQVCGSSLWIWLAAILGISAMNMLIGILIGCSIVSILLIFSVAPNRSVAEHEEIPYQSRS.

Residues 1–3 are Cytoplasmic-facing; sequence MKR. Residues 4 to 24 form a helical membrane-spanning segment; that stretch reads FLLCSFALVLLYPAGIDMYLV. Topologically, residues 25–41 are periplasmic; the sequence is GLPRIAADLNASEAQLH. The chain crosses the membrane as a helical span at residues 42–62; it reads IAFSVYLAGMATAMLFAGKIA. Residues 63–68 are Cytoplasmic-facing; that stretch reads DQSGRK. Residues 69–89 form a helical membrane-spanning segment; that stretch reads PVAIVGAIVFMMASLLCSRAS. Over 90 to 92 the chain is Periplasmic; sequence EGS. A helical membrane pass occupies residues 93 to 113; it reads LFLSGRFLQGVGAGGCYVVAF. At 114–130 the chain is on the cytoplasmic side; the sequence is AILRDTLDEHRRAKVLS. A helical membrane pass occupies residues 131 to 151; it reads LLNGITCIVPVLAPVMGHLIM. Residues 152-157 are Periplasmic-facing; the sequence is LRFPWQ. A helical membrane pass occupies residues 158–178; the sequence is SLFYTMSTMGIMVGLLSLFIL. Topologically, residues 179-216 are cytoplasmic; it reads RETRPARLAPRDLSPSSSAAESLVNRFFVSRLAITTLS. A helical membrane pass occupies residues 217-237; it reads VSVILTFVNASPVLLMEVMGF. The Periplasmic portion of the chain corresponds to 238 to 246; sequence SRGDYAITM. A helical membrane pass occupies residues 247 to 267; the sequence is ALTAGVSMVVSFSTPFALGLF. The Cytoplasmic portion of the chain corresponds to 268–270; that stretch reads KPR. The chain crosses the membrane as a helical span at residues 271–291; it reads TLMLVSQGLFLTAGVTLSLAH. At 292–294 the chain is on the periplasmic side; sequence TNT. The chain crosses the membrane as a helical span at residues 295-315; sequence VTLFGLTLICAGFSVGFGVAM. Topologically, residues 316-332 are cytoplasmic; the sequence is SQALGPFSLRAGVASST. Residues 333–353 form a helical membrane-spanning segment; it reads LGIAQVCGSSLWIWLAAILGI. Topologically, residues 354 to 357 are periplasmic; sequence SAMN. A helical transmembrane segment spans residues 358–378; the sequence is MLIGILIGCSIVSILLIFSVA. The Cytoplasmic segment spans residues 379–395; sequence PNRSVAEHEEIPYQSRS.

It belongs to the major facilitator superfamily. DHA1 family. MdtL (TC 2.A.1.2.22) subfamily.

Its subcellular location is the cell inner membrane. The protein is Multidrug resistance protein MdtL (mdtL) of Salmonella typhi.